A 465-amino-acid chain; its full sequence is Alpha-2A adrenergic receptor (465 aa).

Topologically, residues 1–48 (MFRQEQPLAEGSFAPMGSLQPDAGNSSWNGTEAPGGGTRATPYSLQVT) are extracellular. 2 N-linked (GlcNAc...) asparagine glycosylation sites follow: N25 and N29. A helical transmembrane segment spans residues 49 to 74 (LTLVCLAGLLMLFTVFGNVLVIIAVF). The Cytoplasmic portion of the chain corresponds to 75–85 (TSRALKAPQNL). A helical transmembrane segment spans residues 86–111 (FLVSLASADILVATLVIPFSLANEVM). Residues 112–121 (GYWYFGKVWC) are Extracellular-facing. A disulfide bond links C121 and C203. Residues 122–144 (EIYLALDVLFCTSSIVHLCAISL) traverse the membrane as a helical segment. The Cytoplasmic portion of the chain corresponds to 145–164 (DRYWSITQAIEYNLKRTPRR). Residues 165 to 188 (IKAIIVTVWVISAVISFPPLISIE) traverse the membrane as a helical segment. The Extracellular portion of the chain corresponds to 189–207 (KKGAGGGQQPAEPSCKIND). Residues 208–232 (QKWYVISSSIGSFFAPCLIMILVYV) traverse the membrane as a helical segment. Topologically, residues 233-389 (RIYQIAKRRT…RQNREKRFTF (157 aa)) are cytoplasmic. The disordered stretch occupies residues 242–378 (TRVPPSRRGP…GGGAKASRWR (137 aa)). Residues 313 to 330 (SSEHAERPPGPRRPDRGP) show a composition bias toward basic and acidic residues. S346 is subject to Phosphoserine. Residues 353–363 (GAAGPGASGSG) show a composition bias toward gly residues. R368 carries the post-translational modification Omega-N-methylarginine. Residues 390-414 (VLAVVIGVFVVCWFPFFFTYTLIAV) form a helical membrane-spanning segment. The Extracellular portion of the chain corresponds to 415-424 (GCPVPSQLFN). Residues 425–445 (FFFWFGYCNSSLNPVIYTIFN) form a helical membrane-spanning segment. Topologically, residues 446–465 (HDFRRAFKKILCRGDRKRIV) are cytoplasmic. C457 is lipidated: S-palmitoyl cysteine.

It belongs to the G-protein coupled receptor 1 family. Adrenergic receptor subfamily. ADRA2A sub-subfamily.

It localises to the cell membrane. Alpha-2 adrenergic receptors mediate the catecholamine-induced inhibition of adenylate cyclase through the action of G proteins. The chain is Alpha-2A adrenergic receptor from Mus musculus (Mouse).